A 146-amino-acid polypeptide reads, in one-letter code: UPF0260 protein VP2169 (146 aa).

This sequence belongs to the UPF0260 family.

The chain is UPF0260 protein VP2169 from Vibrio parahaemolyticus serotype O3:K6 (strain RIMD 2210633).